Reading from the N-terminus, the 553-residue chain is ATP synthase F(1) complex subunit alpha, mitochondrial (553 aa).

A mitochondrion-targeting transit peptide spans 1 to 43 (MLSVRIAAAVARALPRRAGLVSKNALGSSFVGTRNLHASNTRL). 2 positions are modified to phosphoserine: Ser53 and Ser65. Position 76 is a phosphoserine; alternate (Ser76). An O-linked (GlcNAc) serine; alternate glycan is attached at Ser76. Residue Ser106 is modified to Phosphoserine. 3 positions are modified to N6-acetyllysine: Lys123, Lys126, and Lys132. Thr134 carries the post-translational modification Phosphothreonine. Lys161 carries the post-translational modification N6-acetyllysine; alternate. An N6-succinyllysine; alternate modification is found at Lys161. Ser166 is subject to Phosphoserine. Lys167 carries the N6-acetyllysine; alternate modification. The residue at position 167 (Lys167) is an N6-succinyllysine; alternate. Ser184 carries the post-translational modification Phosphoserine. An Omega-N-methylarginine modification is found at Arg204. Residues Gln215, Gly217, Lys218, Thr219, and Ser220 each contribute to the ATP site. Thr219 lines the Mg(2+) pocket. N6-acetyllysine; alternate is present on residues Lys230 and Lys239. N6-succinyllysine; alternate occurs at positions 230 and 239. Lys240 carries the N6-acetyllysine modification. Lys261 and Lys305 each carry N6-acetyllysine; alternate. An N6-succinyllysine; alternate mark is found at Lys261 and Lys305. Residue Asp312 participates in Mg(2+) binding. Lys427 is modified (N6-acetyllysine; alternate). Lys427 is subject to N6-succinyllysine; alternate. An N6-acetyllysine modification is found at Lys434. ATP contacts are provided by Gln473 and Gln475. N6-acetyllysine; alternate occurs at positions 498, 506, 531, and 539. An N6-succinyllysine; alternate mark is found at Lys498, Lys506, Lys531, and Lys539. Lys541 carries the post-translational modification N6-acetyllysine.

Belongs to the ATPase alpha/beta chains family. In terms of assembly, homotrimer. Component of the ATP synthase complex composed at least of ATP5F1A/subunit alpha, ATP5F1B/subunit beta, ATP5MC1/subunit c (homooctomer), MT-ATP6/subunit a, MT-ATP8/subunit 8, ATP5ME/subunit e, ATP5MF/subunit f, ATP5MG/subunit g, ATP5MK/subunit k, ATP5MJ/subunit j, ATP5F1C/subunit gamma, ATP5F1D/subunit delta, ATP5F1E/subunit epsilon, ATP5PF/subunit F6, ATP5PB/subunit b, ATP5PD/subunit d, ATP5PO/subunit OSCP. ATP synthase complex consists of a soluble F(1) head domain (subunits alpha(3) and beta(3)) - the catalytic core - and a membrane F(0) domain - the membrane proton channel (subunits c, a, 8, e, f, g, k and j). These two domains are linked by a central stalk (subunits gamma, delta, and epsilon) rotating inside the F1 region and a stationary peripheral stalk (subunits F6, b, d, and OSCP). Interacts with ATPAF2. Interacts with HRG; the interaction occurs on the surface of T-cells and alters the cell morphology when associated with concanavalin (in vitro). Interacts with PLG (angiostatin peptide); the interaction inhibits most of the angiogenic properties of angiostatin. Interacts with BLOC1S1. Interacts with BCL2L1 isoform BCL-X(L); the interaction mediates the association of BCL2L1 isoform BCL-X(L) with the mitochondrial membrane F(1)F(0) ATP synthase and enhances neurons metabolic efficiency. Interacts with CLN5 and PPT1. Interacts with S100A1; this interaction increases F1-ATPase activity. Interacts with ABCB7; this interaction allows the regulation of cellular iron homeostasis and cellular reactive oxygen species (ROS) levels in cardiomyocytes. Acetylated on lysine residues. BLOC1S1 is required for acetylation. Expressed in flagella of epididymal sperm.

It is found in the mitochondrion. Its subcellular location is the mitochondrion inner membrane. The protein localises to the cell membrane. Functionally, subunit alpha, of the mitochondrial membrane ATP synthase complex (F(1)F(0) ATP synthase or Complex V) that produces ATP from ADP in the presence of a proton gradient across the membrane which is generated by electron transport complexes of the respiratory chain. ATP synthase complex consist of a soluble F(1) head domain - the catalytic core - and a membrane F(1) domain - the membrane proton channel. These two domains are linked by a central stalk rotating inside the F(1) region and a stationary peripheral stalk. During catalysis, ATP synthesis in the catalytic domain of F(1) is coupled via a rotary mechanism of the central stalk subunits to proton translocation. In vivo, can only synthesize ATP although its ATP hydrolase activity can be activated artificially in vitro. With the catalytic subunit beta (ATP5F1B), forms the catalytic core in the F(1) domain. Subunit alpha does not bear the catalytic high-affinity ATP-binding sites. This chain is ATP synthase F(1) complex subunit alpha, mitochondrial, found in Rattus norvegicus (Rat).